Here is a 253-residue protein sequence, read N- to C-terminus: 3-deoxy-manno-octulosonate cytidylyltransferase (253 aa).

It belongs to the KdsB family.

Its subcellular location is the cytoplasm. It catalyses the reaction 3-deoxy-alpha-D-manno-oct-2-ulosonate + CTP = CMP-3-deoxy-beta-D-manno-octulosonate + diphosphate. The protein operates within nucleotide-sugar biosynthesis; CMP-3-deoxy-D-manno-octulosonate biosynthesis; CMP-3-deoxy-D-manno-octulosonate from 3-deoxy-D-manno-octulosonate and CTP: step 1/1. It functions in the pathway bacterial outer membrane biogenesis; lipopolysaccharide biosynthesis. Its function is as follows. Activates KDO (a required 8-carbon sugar) for incorporation into bacterial lipopolysaccharide in Gram-negative bacteria. The chain is 3-deoxy-manno-octulosonate cytidylyltransferase from Acidithiobacillus ferrooxidans (strain ATCC 23270 / DSM 14882 / CIP 104768 / NCIMB 8455) (Ferrobacillus ferrooxidans (strain ATCC 23270)).